Consider the following 495-residue polypeptide: Sialin (495 aa).

Residues 1 to 24 form a disordered region; sequence MKSPVSDLAPSDGEEGSDRTPLLQ. Position 3 is a phosphoserine (serine 3). The Dileucine internalization motif motif lies at 22–23; that stretch reads LL. The helical transmembrane segment at 42 to 62 threads the bilayer; it reads LAFLSFFGFFVLYSLRVNLSV. N-linked (GlcNAc...) asparagine glycosylation is found at asparagine 71, asparagine 77, and asparagine 95. The next 11 helical transmembrane spans lie at 110 to 130, 137 to 157, 159 to 179, 201 to 221, 228 to 248, 289 to 309, 329 to 349, 366 to 386, 392 to 412, 424 to 444, and 458 to 478; these read WILGSFFYGYIITQIPGGYVA, LLLGFGIFATAIFTLFTPLAA, FGVGALVALRALEGLGEGVTY, ISYAGAQLGTVVSLPLSGVIC, YVFYFFGIVGIIWFILWICLV, LPLWAIVVAHFSYNWTFYTLL, FLSAVPYLGCWLCMILSGQAA, VFSLIGMIGPAIFLVAAGFIG, AVAFLTISTTLGGFCSSGFSI, ILLGITNTFATIPGMIGPIIA, and TVFCIAAAINVFGAIFFTLFA.

This sequence belongs to the major facilitator superfamily. Sodium/anion cotransporter family. Significantly expressed in lung endothelial cells, and much less in liver.

The protein localises to the basolateral cell membrane. It is found in the cytoplasmic vesicle. The protein resides in the secretory vesicle. Its subcellular location is the synaptic vesicle membrane. It localises to the lysosome membrane. It carries out the reaction N-acetylneuraminate(in) + H(+)(in) = N-acetylneuraminate(out) + H(+)(out). The enzyme catalyses D-glucuronate(out) + H(+)(out) = D-glucuronate(in) + H(+)(in). It catalyses the reaction 2 nitrate(out) + H(+)(out) = 2 nitrate(in) + H(+)(in). The catalysed reaction is L-aspartate(out) = L-aspartate(in). It carries out the reaction L-glutamate(out) = L-glutamate(in). The enzyme catalyses N-acetyl-L-aspartyl-L-glutamate(out) = N-acetyl-L-aspartyl-L-glutamate(in). Its function is as follows. Multifunctional anion transporter that operates via two distinct transport mechanisms, namely proton-coupled anion cotransport and membrane potential-dependent anion transport. Electroneutral proton-coupled acidic monosaccharide symporter, with a sugar to proton stoichiometry of 1:1. Exports glucuronic acid and free sialic acid derived from sialoglycoconjugate degradation out of lysosomes, driven by outwardly directed lysosomal pH gradient. May regulate lysosome function and metabolism of sialylated conjugates that impact oligodendrocyte lineage differentiation and myelinogenesis in the central nervous system. Electrogenic proton-coupled nitrate symporter that transports nitrate ions across the basolateral membrane of salivary gland acinar cells, with nitrate to proton stoichiometry of 2:1. May contribute to nitrate clearance from serum by salivary glands, where it is further concentrated and secreted in the saliva. Uses membrane potential to drive the uptake of acidic amino acids and peptides into synaptic vesicles. Responsible for synaptic vesicular storage of L-aspartate and L-glutamate in pinealocytes as well as vesicular uptake of N-acetyl-L-aspartyl-L-glutamate neuropeptide, relevant to aspartegic-associated glutamatergic neurotransmission and activation of metabotropic receptors that inhibit subsequent transmitter release. In terms of biological role, receptor for CM101, a polysaccharide produced by group B Streptococcus with antipathoangiogenic properties. The chain is Sialin (SLC17A5) from Ovis aries (Sheep).